A 486-amino-acid polypeptide reads, in one-letter code: MIINLQELIALLPFLILLLTVVIVILSISYNRNHFFIAFLTIISLIVSLCSLYFLIAIVPIDITSLFHITKRSILYISMIIISSIATCVFAYPWLLKYAFNKEEFYLLTLISTLGAIFLTISNHMASLFISVELMSLPIFGLIAYSNSQKYSLEASFKYLVLSGVSSSFLLLGISWIYAISGNLSLLCLNQIFSDLSNSEKMMVLFGIIMVLMSFFFKLSMVPFHLWTADIYQGTPASVLSFFSVSGKIAIFSILLYFFSYFSVFDNKVIFLILSLISFFSILFGNLMAIFQTNIKRFFGYSSISQIGYLLIILLVSKDEYFFSVQTGGIFLLNYLCTNIVYFGVINLFSNSCDYDIDSIHLYKGLFWVQPLLASIVTIVLLSLGGIPITLGFFGKFCIFSIIIKNHLWTIGASFLIGTILGLYGYLRLIVNMYLNPSEQSFINDIKKSNFWLCSPSGILIFISGIMLLILGIYPNPLINLINSVQ.

The next 14 helical transmembrane spans lie at 8–28, 36–56, 74–94, 104–124, 125–145, 160–180, 204–224, 239–259, 270–290, 298–318, 329–349, 374–394, 407–427, and 459–479; these read LIAL…ILSI, FIAF…YFLI, ILYI…AYPW, EFYL…ISNH, MASL…LIAY, LVLS…IYAI, VLFG…MVPF, VLSF…LYFF, IFLI…LMAI, FFGY…LVSK, GIFL…INLF, ASIV…LGFF, HLWT…YGYL, and ILIF…NPLI.

It belongs to the complex I subunit 2 family. In terms of assembly, NDH-1 is composed of 13 different subunits. Subunits NuoA, H, J, K, L, M, N constitute the membrane sector of the complex.

The protein localises to the cell membrane. The enzyme catalyses a quinone + NADH + 5 H(+)(in) = a quinol + NAD(+) + 4 H(+)(out). In terms of biological role, NDH-1 shuttles electrons from NADH, via FMN and iron-sulfur (Fe-S) centers, to quinones in the respiratory chain. The immediate electron acceptor for the enzyme in this species is believed to be ubiquinone. Couples the redox reaction to proton translocation (for every two electrons transferred, four hydrogen ions are translocated across the cytoplasmic membrane), and thus conserves the redox energy in a proton gradient. This chain is NADH-quinone oxidoreductase subunit N, found in Buchnera aphidicola subsp. Schizaphis graminum (strain Sg).